A 932-amino-acid polypeptide reads, in one-letter code: Eukaryotic translation initiation factor 3 subunit A (932 aa).

The PCI domain occupies 309 to 492; it reads KPATANFVIL…NSISFSSDLF (184 aa). Phosphoserine is present on residues Ser374 and Ser501. Residues 537–862 adopt a coiled-coil conformation; the sequence is LRKQQAEAAY…DEEISRKLAE (326 aa). Residues 793-865 are compositionally biased toward basic and acidic residues; it reads AEEEAARAAE…ISRKLAEKAA (73 aa). Residues 793-932 are disordered; that stretch reads AEEEAARAAE…PPSRRNQQQQ (140 aa). Phosphoserine occurs at positions 874, 875, and 877. The span at 877-893 shows a compositional bias: low complexity; that stretch reads SPGAWRRGGASAGGVSR.

This sequence belongs to the eIF-3 subunit A family. Component of the eukaryotic translation initiation factor 3 (eIF-3) complex. The eIF-3 complex appears to include tif32/eif3a, SPAC25G10.08/eif3b, tif33/eif3c, SPBC4C3.07/eif3f, tif35/eif3g and sum1/eif3i. This set of common subunits may also associate exclusively with either moe1/eif3d and int6/eif3e, or with SPAC821.05/eif3h and SPAC1751.03/eif3m. The eIF-3 complex may also include SPAC3A12.13c/eif3j.

It localises to the cytoplasm. In terms of biological role, RNA-binding component of the eukaryotic translation initiation factor 3 (eIF-3) complex, which is involved in protein synthesis of a specialized repertoire of mRNAs and, together with other initiation factors, stimulates binding of mRNA and methionyl-tRNAi to the 40S ribosome. The eIF-3 complex specifically targets and initiates translation of a subset of mRNAs involved in cell proliferation. The protein is Eukaryotic translation initiation factor 3 subunit A (tif32) of Schizosaccharomyces pombe (strain 972 / ATCC 24843) (Fission yeast).